The primary structure comprises 324 residues: MTNPVSTIDMTVTQITRVAKDINSYELRPEPGVILPEFTAGAHIGVSLPNGIQRSYSLVNPQGERDRYVITVNLDRNSRGGSRYLHEQLRVGQRLSIVPPANNFALVETAPHSVLFAGGIGITPIWSMIQRLRELGSTWELHYACRGKDFVAYRQELEQAAAEAGARFHLHLDEEADGKFLDLAGPVAQAGQDSIFYCCGPEAMLQAYKAATADLPSERVRFEHFGAALTGEPADDVFTVVLARRSGQEFTVEPGMTILETLLQNGISRNYSCTQGVCGTCETKVLEGEPDHRDWVLSDEKKASNSTMLICCSLSKSPRLVLDI.

The FAD-binding FR-type domain maps to 5–107; that stretch reads VSTIDMTVTQ…VPPANNFALV (103 aa). Residues 238–324 enclose the 2Fe-2S ferredoxin-type domain; sequence FTVVLARRSG…SKSPRLVLDI (87 aa). Positions 273, 278, 281, and 311 each coordinate [2Fe-2S] cluster.

It belongs to the PDR/VanB family. As to quaternary structure, homotrimer. FMN is required as a cofactor. It depends on [2Fe-2S] cluster as a cofactor.

The catalysed reaction is 2,3,5,6-tetrachlorohydroquinone + NAD(+) + H(+) = 2,3,5,6-tetrachloro-1,4-benzoquinone + NADH. It functions in the pathway xenobiotic degradation; pentachlorophenol degradation. With respect to regulation, in vitro, activated by tetrachlorohydroquinone (TCHQ) at low concentrations and inhibited at high concentrations (above 200 uM). However, PcpD would only be stimulated by tetrachlorohydroquinone (TCHQ) under in vivo conditions due to the toxicity of tetrachlorohydroquinone (TCHQ). Competitively inhibited by pentachlorophenol (PCP) in a concentration-dependent manner. PcpD is regulated by tetrachlorohydroquinone (TCHQ) and pentachlorophenol (PCP) using a mechanism, which maintains tetrachlorobenzoquinone at a level that would neither significantly decrease the biodegradation of pentachlorophenol (PCP) nor cause cytotoxicity in cells. Its function is as follows. Involved in the degradation of the xenobiocide pentachlorophenol (PCP). Catalyzes the reduction of tetrachlorobenzoquinone (TCBQ) to yield tetrachlorohydroquinone (TCHQ). Also able to reduce 2,6-dichloroindophenol (DCIP). This is Tetrachlorobenzoquinone reductase from Sphingobium chlorophenolicum.